We begin with the raw amino-acid sequence, 467 residues long: MDTAGIRLTPKEIVSKLNEYIVGQNDAKRKVAIALRNRYRRSLLDEESKQEISPKNILMIGPTGVGKTEIARRMAKVVGAPFIKVEATKFTEVGYVGRDVESMVRDLVDVSVRLVKAQKKSLVQDEATAKANEKLVKLLVPSMKKKASQTNNPLESLFGGAIPNFGQNNEDEEEPPTEEIKTKRSEIKRQLEEGKLEKEKVRIKVEQDPGALGMLGTNQNQQMQEMMNQLMPKKKVEREVAVETARKILADSYADELIDQESANQEALELAEQMGIIFIDEIDKVATNNHNSGQDVSRQGVQRDILPILEGSVIQTKYGTVNTEHMLFIGAGAFHVSKPSDLIPELQGRFPIRVELDSLAVEDFVRILTEPKLSLIKQYEALLQTEEVTVNFTDEAITRLAEIAYQVNQDTDNIGARRLHTILEKMLEDLSFEAPSMPNAVVDITPQYVDDKLKSISTNKDLSAFIL.

ATP-binding positions include valine 22 and glycine 64–glutamate 69. Residues glutamine 149–glutamate 192 are disordered. A compositionally biased stretch (basic and acidic residues) spans glutamate 178–glutamate 192. The ATP site is built by aspartate 280, glutamate 345, and arginine 417.

Belongs to the ClpX chaperone family. HslU subfamily. As to quaternary structure, a double ring-shaped homohexamer of HslV is capped on each side by a ring-shaped HslU homohexamer. The assembly of the HslU/HslV complex is dependent on binding of ATP.

It is found in the cytoplasm. Its function is as follows. ATPase subunit of a proteasome-like degradation complex; this subunit has chaperone activity. The binding of ATP and its subsequent hydrolysis by HslU are essential for unfolding of protein substrates subsequently hydrolyzed by HslV. HslU recognizes the N-terminal part of its protein substrates and unfolds these before they are guided to HslV for hydrolysis. This chain is ATP-dependent protease ATPase subunit HslU, found in Staphylococcus aureus (strain MRSA252).